The chain runs to 192 residues: LOB domain-containing protein 32 (192 aa).

The region spanning 4-105 (NRCAVCKILN…QDIESAVNEL (102 aa)) is the LOB domain.

It belongs to the LOB domain-containing protein family.

This Arabidopsis thaliana (Mouse-ear cress) protein is LOB domain-containing protein 32 (LBD32).